Here is a 256-residue protein sequence, read N- to C-terminus: Imidazole glycerol phosphate synthase subunit hisF1 (256 aa).

Catalysis depends on residues aspartate 11 and aspartate 130.

Belongs to the HisA/HisF family. Heterodimer of HisH and HisF.

It localises to the cytoplasm. The enzyme catalyses 5-[(5-phospho-1-deoxy-D-ribulos-1-ylimino)methylamino]-1-(5-phospho-beta-D-ribosyl)imidazole-4-carboxamide + L-glutamine = D-erythro-1-(imidazol-4-yl)glycerol 3-phosphate + 5-amino-1-(5-phospho-beta-D-ribosyl)imidazole-4-carboxamide + L-glutamate + H(+). It functions in the pathway amino-acid biosynthesis; L-histidine biosynthesis; L-histidine from 5-phospho-alpha-D-ribose 1-diphosphate: step 5/9. IGPS catalyzes the conversion of PRFAR and glutamine to IGP, AICAR and glutamate. The HisF subunit catalyzes the cyclization activity that produces IGP and AICAR from PRFAR using the ammonia provided by the HisH subunit. The protein is Imidazole glycerol phosphate synthase subunit hisF1 (hisF1) of Parasynechococcus marenigrum (strain WH8102).